An 899-amino-acid polypeptide reads, in one-letter code: MARHGCLGLGLFCCVLFAATVGPQPTPSIPGAPATTLTPVPQSEASMLSLNLGLNFKFHLRGPAAVWGSPVTETQPLSLGPGQEPGEEVASGLRTDPLWELLVGSSGNSLTEWGSTEGGSKPRASSLLPESTSRRSGPSDGPTAPYQPRRSTVTWDTALMVTALPSSAPRPHQSELELKFDMALRAGAAPTLGHRTLPLLPSLRASLAEIAGRLGPFGFFGTTLSPLRNFSGLSPPGETTSTSSASGVSGSLGFLGTTLSLPPYSLERKLSSPSPLDPAASLSFASIATTSLDPTVPISGPDDLSPPASLGNPSGQPECGPGSCSVGELPEREGQPPEAPRPLFFLTLEADWAEARARWGLAWEAHVYGVGALFGLVALLALLALALLPWRCPPGAPCLALLDLLLLSAGTTRAFPLFYDAYGHRDRLPALAWLLLQDLPLPCLAAGLGLACLLLARPRPPRCPTGLAALLLLGLGLAAAAALGSAAHRPLRPLRLASRGLHAFLAAFLSGLLLALSCWGGRRRRAGAPLGGSGFKGATPLPQGRSPFAPRESWRRAARTAPVAGTFGLLSGALQGYEVLHALGYGGQSGLEGPWPWWAFQLGLRLGEVGVALPLALLGLYPALCSPRVPPRCWAKLFRLSPGHAAPLLPGGWVTGPPDKEPLGSAIARGDAELLQLCALAGPGPDLLLQGGGCRGFEGAAANPAPSPASSPCSDYTVDFRPPSPINLRRSIEEALCSEALLAPGLFQGPAFEDALPGLGLYRTASLGTGGRASERSGEASGPAAPPELPSPGAWPAGSSVSSGSFCGLSRDSSSMLLCSSPDRPPRCPLVCVLSPPRPSGSSPSLPASGSYQALSPPSRDSPEPASELQAEEALLQEQFLDACRQIDELSVGSDTIDL.

An N-terminal signal peptide occupies residues 1–23 (MARHGCLGLGLFCCVLFAATVGP). Disordered regions lie at residues 110–152 (LTEW…RRST) and 295–340 (TVPI…PEAP). 5 helical membrane-spanning segments follow: residues 370–390 (VGAL…LLPW), 392–412 (CPPG…AGTT), 430–450 (ALAW…GLGL), 467–487 (LAAL…GSAA), and 500–520 (GLHA…SCWG). Position 641 is a phosphoserine (serine 641). 2 disordered regions span residues 769-797 (TGGR…AWPA) and 839-869 (PSGS…ASEL). The segment covering 840-851 (SGSSPSLPASGS) has biased composition (low complexity).

It is found in the membrane. The sequence is that of Proline-rich transmembrane protein 4 (PRRT4) from Homo sapiens (Human).